The sequence spans 174 residues: Transcription antitermination protein NusB (174 aa).

It belongs to the NusB family.

Its function is as follows. Involved in transcription antitermination. Required for transcription of ribosomal RNA (rRNA) genes. Binds specifically to the boxA antiterminator sequence of the ribosomal RNA (rrn) operons. The protein is Transcription antitermination protein NusB of Rhodopseudomonas palustris (strain TIE-1).